A 280-amino-acid chain; its full sequence is Fructose-1,6-bisphosphatase class 1 (280 aa).

Mg(2+) is bound by residues Glu64, Asp83, Leu85, and Asp86. Residues 86-89 (DGSS), Tyr189, and Lys220 each bind substrate. Glu226 is a binding site for Mg(2+).

Belongs to the FBPase class 1 family. Homotetramer. It depends on Mg(2+) as a cofactor.

Its subcellular location is the cytoplasm. It catalyses the reaction beta-D-fructose 1,6-bisphosphate + H2O = beta-D-fructose 6-phosphate + phosphate. Its pathway is carbohydrate biosynthesis; gluconeogenesis. This is Fructose-1,6-bisphosphatase class 1 from Campylobacter jejuni (strain RM1221).